We begin with the raw amino-acid sequence, 197 residues long: Small ribosomal subunit protein uS7 (197 aa).

This sequence belongs to the universal ribosomal protein uS7 family.

This is Small ribosomal subunit protein uS7 (RPS5) from Cicer arietinum (Chickpea).